A 1575-amino-acid polypeptide reads, in one-letter code: Laminin subunit gamma-3 (1575 aa).

The N-terminal stretch at M1–G19 is a signal peptide. In terms of domain architecture, Laminin N-terminal spans R31–R270. 2 N-linked (GlcNAc...) asparagine glycosylation sites follow: N87 and N119. Intrachain disulfides connect C271–C280, C273–C290, C292–C301, C304–C324, C327–C336, C329–C352, C355–C364, C367–C380, C383–C395, C385–C401, C403–C412, C415–C427, C430–C441, C432–C448, C450–C459, and C462–C477. Laminin EGF-like domains are found at residues C271–P326, C327–P382, C383–P429, and C430–S479. N295 is a glycosylation site (N-linked (GlcNAc...) asparagine). N-linked (GlcNAc...) asparagine glycosylation occurs at N328. One can recognise a Laminin EGF-like 5; first part domain in the interval C480–C489. The Laminin IV type A domain maps to H499–I672. N-linked (GlcNAc...) asparagine glycosylation occurs at N631. A Laminin EGF-like 5; second part domain is found at C673–P706. Disulfide bonds link C707/C715, C709/C722, C724/C733, C736/C752, C755/C763, C757/C774, C777/C786, C789/C807, C810/C824, C812/C831, C834/C843, C846/C863, C866/C880, C868/C887, C889/C898, C901/C914, C917/C929, C919/C936, C938/C947, C950/C962, C965/C977, C967/C983, C985/C994, and C997/C1010. 6 consecutive Laminin EGF-like domains span residues C707 to P754, C755 to Q809, C810 to P865, C866 to S916, C917 to A964, and C965 to C1013. N837 is a glycosylation site (N-linked (GlcNAc...) asparagine). N980 is a glycosylation site (N-linked (GlcNAc...) asparagine). The tract at residues P1014 to Q1575 is domain II and I. The Cell attachment site signature appears at R1059–D1061. Residues R1073–A1134 adopt a coiled-coil conformation. Residue N1185 is glycosylated (N-linked (GlcNAc...) asparagine). Residues L1201–V1228 adopt a coiled-coil conformation. The tract at residues K1378–R1399 is disordered. Coiled coils occupy residues K1410–L1492 and G1523–L1567.

As to quaternary structure, laminin is a complex glycoprotein, consisting of three different polypeptide chains (alpha, beta, gamma), which are bound to each other by disulfide bonds into a cross-shaped molecule comprising one long and three short arms with globules at each end. Gamma-3 is a subunit of laminin-12 (laminin-213), laminin-14 (laminin-423) and laminin-15 (laminin-523). In terms of tissue distribution, broadly expressed in: skin, heart, lung, and the reproductive tracts.

It is found in the secreted. It localises to the extracellular space. The protein resides in the extracellular matrix. Its subcellular location is the basement membrane. Functionally, binding to cells via a high affinity receptor, laminin is thought to mediate the attachment, migration and organization of cells into tissues during embryonic development by interacting with other extracellular matrix components. In Homo sapiens (Human), this protein is Laminin subunit gamma-3 (LAMC3).